We begin with the raw amino-acid sequence, 339 residues long: Putative NADP-dependent oxidoreductase YfmJ (339 aa).

NADP(+) is bound by residues 156 to 159, lysine 182, tyrosine 198, asparagine 222, 244 to 250, 277 to 279, and asparagine 327; these read GAVG, CGAISSY, and FIV.

This sequence belongs to the NADP-dependent oxidoreductase L4BD family.

Its function is as follows. Putative quinone oxidoreductase that may contribute to the degradation of aromatic compounds. The polypeptide is Putative NADP-dependent oxidoreductase YfmJ (yfmJ) (Bacillus subtilis (strain 168)).